A 554-amino-acid polypeptide reads, in one-letter code: DnaJ homolog subfamily C member 1 (554 aa).

Positions 1–47 (MTAPCSQPAQLPGRRQLGLVPFPPPPPRTPLLWLLLLLLAAVAPARG) are cleaved as a signal peptide. Residues 48-153 (WESGDLELFD…RRVRKMSNAE (106 aa)) lie on the Lumenal side of the membrane. Residues 65 to 129 (NFYQFLGVQQ…ERRQRYDDIL (65 aa)) form the J domain. A helical transmembrane segment spans residues 154–174 (LALLLFIILTVGHYAVVWSIY). The Cytoplasmic segment spans residues 175–554 (LEKQLDELLS…LVQKKKQAKS (380 aa)). An SANT 1 domain is found at 325–379 (KQAPEWTEEDLSQLTRSMVKFPGGTPGRWEKIAHELGRSVTDVTTKAKQLKDSVT). Residue Ser-381 is modified to Phosphoserine. Residues 392–405 (STVQNSRPIKTATT) show a composition bias toward polar residues. The tract at residues 392–500 (STVQNSRPIK…RSAEEPWTQN (109 aa)) is disordered. The span at 421-432 (AAEEEQEGDSGE) shows a compositional bias: acidic residues. Ser-430 is modified (phosphoserine). A compositionally biased stretch (basic and acidic residues) spans 455–472 (AKPEPEEKSRAKRQKDFD). Over residues 473–482 (IAEQNESSDE) the composition is skewed to acidic residues. Residues Ser-479, Ser-480, Ser-484, and Ser-492 each carry the phosphoserine modification. Residues 483–494 (ESLRKERARSAE) show a composition bias toward basic and acidic residues. Residues 492 to 547 (SAEEPWTQNQQKLLELALQQYPRGSSDRWDKIARCVPSKSKEDCIARYKLLVELVQ) enclose the SANT 2 domain.

Interacts (via J domain) with HSPA5. Interacts (via cytosolic domain) with ribosomes. Interacts (via SANT 2 domain) with SERPINA3; the interaction delays the formation of the covalent inhibitory complex SERPINA3-chymotrypsin, but does not alter the catalytic activity of SERPINA3. Interacts (via SANT 2 domain) with ITIH4 (via C-terminus); the interaction protects ITIH4 against in vitro cleavage by kallikrein.

It is found in the endoplasmic reticulum membrane. Its subcellular location is the nucleus membrane. The protein resides in the microsome membrane. In terms of biological role, may modulate protein synthesis. This is DnaJ homolog subfamily C member 1 (DNAJC1) from Homo sapiens (Human).